The sequence spans 461 residues: D-phenylhydantoinase (461 aa).

The a divalent metal cation site is built by H59, H61, and K151. N6-carboxylysine is present on K151. Y156 is a binding site for substrate. H182 and H239 together coordinate a divalent metal cation. S286 is a binding site for substrate. D313 provides a ligand contact to a divalent metal cation. N335 contributes to the substrate binding site.

It belongs to the metallo-dependent hydrolases superfamily. Hydantoinase/dihydropyrimidinase family. As to quaternary structure, homotetramer. The cofactor is Zn(2+). Ni(2+) is required as a cofactor. Requires Co(2+) as cofactor. Mn(2+) serves as cofactor. Carboxylation allows a single lysine to coordinate two divalent metal cations.

It catalyses the reaction D-5-phenylhydantoin + H2O = N-carbamoyl-D-phenylglycine + H(+). Its function is as follows. Catalyzes the stereospecific hydrolysis of the cyclic amide bond of D-hydantoin derivatives with an aromatic side chains at the 5'-position. Has no activity on dihydropyrimidines. The physiological function is unknown. The protein is D-phenylhydantoinase (hyuA) of Escherichia coli (strain K12).